The sequence spans 511 residues: Phenylalanine--tRNA ligase alpha subunit (511 aa).

Residues Thr352, 390–392 (QVE), Tyr429, and Phe455 each bind L-phenylalanine.

The protein belongs to the class-II aminoacyl-tRNA synthetase family. Phe-tRNA synthetase alpha subunit type 2 subfamily. As to quaternary structure, tetramer of two alpha and two beta subunits. Requires Mg(2+) as cofactor.

The protein resides in the cytoplasm. The catalysed reaction is tRNA(Phe) + L-phenylalanine + ATP = L-phenylalanyl-tRNA(Phe) + AMP + diphosphate + H(+). The chain is Phenylalanine--tRNA ligase alpha subunit from Methanothermobacter thermautotrophicus (strain ATCC 29096 / DSM 1053 / JCM 10044 / NBRC 100330 / Delta H) (Methanobacterium thermoautotrophicum).